Here is a 319-residue protein sequence, read N- to C-terminus: Ribonuclease Z (319 aa).

Zn(2+)-binding residues include histidine 62, histidine 64, aspartate 66, histidine 67, histidine 139, aspartate 209, and histidine 268. The active-site Proton acceptor is the aspartate 66.

The protein belongs to the RNase Z family. In terms of assembly, homodimer. Zn(2+) serves as cofactor.

The catalysed reaction is Endonucleolytic cleavage of RNA, removing extra 3' nucleotides from tRNA precursor, generating 3' termini of tRNAs. A 3'-hydroxy group is left at the tRNA terminus and a 5'-phosphoryl group is left at the trailer molecule.. Its function is as follows. Zinc phosphodiesterase, which displays some tRNA 3'-processing endonuclease activity. Probably involved in tRNA maturation, by removing a 3'-trailer from precursor tRNA. The sequence is that of Ribonuclease Z from Pseudomonas putida (strain GB-1).